An 856-amino-acid chain; its full sequence is DNA mismatch repair protein MutS (856 aa).

611-618 (GPNMGGKS) serves as a coordination point for ATP.

Belongs to the DNA mismatch repair MutS family.

In terms of biological role, this protein is involved in the repair of mismatches in DNA. It is possible that it carries out the mismatch recognition step. This protein has a weak ATPase activity. The sequence is that of DNA mismatch repair protein MutS from Histophilus somni (strain 129Pt) (Haemophilus somnus).